A 299-amino-acid polypeptide reads, in one-letter code: Oxygen-dependent coproporphyrinogen-III oxidase (299 aa).

S92 is a substrate binding site. 2 residues coordinate a divalent metal cation: H96 and H106. H106 serves as the catalytic Proton donor. 108–110 is a binding site for substrate; sequence NVR. A divalent metal cation-binding residues include H145 and H175. Residues 240-275 are important for dimerization; that stretch reads YVEFNLVWDRGTLFGLQTGGRTESILMSMPPLVRWE. 258–260 is a binding site for substrate; that stretch reads GGR.

The protein belongs to the aerobic coproporphyrinogen-III oxidase family. In terms of assembly, homodimer. The cofactor is a divalent metal cation.

It is found in the cytoplasm. It catalyses the reaction coproporphyrinogen III + O2 + 2 H(+) = protoporphyrinogen IX + 2 CO2 + 2 H2O. It participates in porphyrin-containing compound metabolism; protoporphyrin-IX biosynthesis; protoporphyrinogen-IX from coproporphyrinogen-III (O2 route): step 1/1. Its function is as follows. Involved in the heme biosynthesis. Catalyzes the aerobic oxidative decarboxylation of propionate groups of rings A and B of coproporphyrinogen-III to yield the vinyl groups in protoporphyrinogen-IX. The sequence is that of Oxygen-dependent coproporphyrinogen-III oxidase from Salmonella newport (strain SL254).